Here is a 382-residue protein sequence, read N- to C-terminus: Sialidase (382 aa).

Arg-37 serves as a coordination point for substrate. The active-site Proton acceptor is Asp-62. 3 BNR repeats span residues 71–82 (ARSTDFGKTWSY), 140–151 (IYSDDNGLTWSN), and 208–219 (IYSKDNGETWTM). Arg-245 provides a ligand contact to substrate. The stretch at 255–266 (YISHDLGTTWEI) is one BNR 4 repeat. Tyr-347 acts as the Nucleophile in catalysis.

This sequence belongs to the glycosyl hydrolase 33 family.

It is found in the secreted. The enzyme catalyses Hydrolysis of alpha-(2-&gt;3)-, alpha-(2-&gt;6)-, alpha-(2-&gt;8)- glycosidic linkages of terminal sialic acid residues in oligosaccharides, glycoproteins, glycolipids, colominic acid and synthetic substrates.. Functionally, sialidases have been suggested to be pathogenic factors in microbial infections. The polypeptide is Sialidase (nanH) (Clostridium perfringens).